Consider the following 302-residue polypeptide: Dioxygenase ALT11 (302 aa).

Residues 1-22 (MSSPELPSQMGVPNGHTKLQEV) are disordered. Histidine 147, aspartate 149, and histidine 223 together coordinate Fe cation.

This sequence belongs to the PhyH family. In terms of assembly, homodimer. The cofactor is Fe cation.

It functions in the pathway mycotoxin biosynthesis. Its function is as follows. Dioxygenase; part of the gene cluster that mediates the biosynthesis of the host-selective toxins (HSTs) AAL-toxins, sphinganine-analog mycotoxins responsible for Alternaria stem canker on tomato by the tomato pathotype. The biosynthesis starts with the polyketide synthase ALT1-catalyzed C-16 carbon chain assembly from one starter acetyl-CoA unit with malonyl-CoA extender units. ALT1 also selectively transfers methyl groups at the first and the third cycle of chain elongation for AAL toxin. The C-16 polyketide chain is released from the enzyme by a nucleophilic attack of a carbanion, which is derived from R-carbon of glycin by decarboxylation, on the carbonyl carbon of polyketide acyl chain. This step is probably catalyzed by a pyridoxal 5'-phosphate-dependent aminoacyl transferase ALT4. The respective functions of the other enzymes encoded by the cluster have still to be elucidated. The sphingosine N-acyltransferase-like protein ALT7 seems not to act as a resistance/self-tolerance factor against the toxin in the toxin biosynthetic gene cluster, contrary to what is expected. This is Dioxygenase ALT11 from Alternaria alternata (Alternaria rot fungus).